Consider the following 910-residue polypeptide: Bifunctional glucose-6-phosphate 1-dehydrogenase/6-phosphogluconolactonase (910 aa).

A 6-phosphogluconolactonase region spans residues 1-170; sequence MDYENFVKSA…DFHIASLFPN (170 aa). The interval 171 to 276 is linker; sequence IFYNIYMNNY…PATYLIDTSC (106 aa). A glucose-6-phosphate 1-dehydrogenase region spans residues 277-910; the sequence is TNENVNINNN…FYEDDLLDIN (634 aa). Residues 345 to 352, arginine 379, and lysine 548 contribute to the NADP(+) site; that span reads GCSGDLAK. D-glucose 6-phosphate-binding positions include lysine 548, 578–582, glutamate 616, and aspartate 635; that span reads HYLGK. The Proton acceptor role is filled by histidine 640. The disordered stretch occupies residues 689 to 711; it reads ENFKEDENNDDESKKNHSYHDDP. Lysine 742 lines the NADP(+) pocket. Lysine 745 lines the D-glucose 6-phosphate pocket. NADP(+) is bound at residue arginine 755. Glutamine 779 is a D-glucose 6-phosphate binding site. 785 to 787 lines the NADP(+) pocket; that stretch reads YLK.

This sequence in the N-terminal section; belongs to the glucosamine/galactosamine-6-phosphate isomerase family. 6-phosphogluconolactonase subfamily. In the C-terminal section; belongs to the glucose-6-phosphate dehydrogenase family. In terms of assembly, homotetramer.

The catalysed reaction is 6-phospho-D-glucono-1,5-lactone + H2O = 6-phospho-D-gluconate + H(+). The enzyme catalyses D-glucose 6-phosphate + NADP(+) = 6-phospho-D-glucono-1,5-lactone + NADPH + H(+). It participates in carbohydrate degradation; pentose phosphate pathway; D-ribulose 5-phosphate from D-glucose 6-phosphate (oxidative stage): step 1/3. The protein operates within carbohydrate degradation; pentose phosphate pathway; D-ribulose 5-phosphate from D-glucose 6-phosphate (oxidative stage): step 2/3. G6PD activity is inhibited by glucosamine-6-phosphate, NADPH, and 4-(4-bromophenyl)-7-(3,4-dimethoxyphenyl)-4,6,7,8-tetrahydroquinoline-2,5(1 H,3H)-dione. G6PD and 6PGL activities can be reversibly inhibited by S-glutathionylation (in vitro). Bifunctional enzyme which catalyzes the first two steps of the oxidative pentose-phosphate pathway, which represents a route for the dissimilation of carbohydrates besides glycolysis. The main function of this enzyme is to provide reducing power (NADPH) and pentose phosphates for fatty acid and nucleic acid synthesis. This Plasmodium falciparum (isolate 3D7) protein is Bifunctional glucose-6-phosphate 1-dehydrogenase/6-phosphogluconolactonase.